Consider the following 316-residue polypeptide: Probable cell division protein WhiA (316 aa).

The segment at residues 275 to 309 (TLKELGEMVSGGKISKSGINHRLRKIDDIAEKLRA) is a DNA-binding region (H-T-H motif).

Belongs to the WhiA family.

Involved in cell division and chromosome segregation. This chain is Probable cell division protein WhiA, found in Bacillus anthracis (strain CDC 684 / NRRL 3495).